Reading from the N-terminus, the 811-residue chain is Transmembrane protease serine 6 (811 aa).

Residues 1–48 (MPRCFQLPCSTRMPTTEVPQAADGQGDAGDGEEAAEPEGKFKPPKNTK) form a disordered region. Residues 1–59 (MPRCFQLPCSTRMPTTEVPQAADGQGDAGDGEEAAEPEGKFKPPKNTKRKNRDYVRFTP) lie on the Cytoplasmic side of the membrane. Positions 8–18 (PCSTRMPTTEV) are enriched in polar residues. A helical; Signal-anchor for type II membrane protein transmembrane segment spans residues 60 to 80 (LLLVLAALVSAGVMLWYFLGY). The Extracellular portion of the chain corresponds to 81–811 (KAEVTVSQVY…VINWIQQVLT (731 aa)). The SEA domain maps to 86 to 209 (VSQVYSGSLR…EGLVILEASV (124 aa)). N-linked (GlcNAc...) asparagine glycosylation is found at asparagine 138, asparagine 184, asparagine 216, asparagine 338, asparagine 433, and asparagine 453. 2 consecutive CUB domains span residues 213-336 (VVLN…QDCQ) and 323-440 (FLLS…QISL). Residues cysteine 335 and cysteine 366 are joined by a disulfide bond. LDL-receptor class A domains lie at 445–477 (VQVYYSLYNQSDPCPGEFLCSVNGLCVPACDGI), 478–514 (KDCPNGLDERNCVCRAMFQCQEDSTCISLPRVCDRQP), and 518–555 (NGSDEEQCQEGVPCGTFTFQCEDRSCVKKPNPECDGQS). 10 disulfide bridges follow: cysteine 458-cysteine 470, cysteine 464-cysteine 480, cysteine 474-cysteine 489, cysteine 491-cysteine 503, cysteine 497-cysteine 516, cysteine 510-cysteine 525, cysteine 531-cysteine 543, cysteine 538-cysteine 557, cysteine 551-cysteine 566, and cysteine 602-cysteine 618. N-linked (GlcNAc...) asparagine glycosylation occurs at asparagine 518. The region spanning 577-811 (IVGGTVSSEG…VINWIQQVLT (235 aa)) is the Peptidase S1 domain. Residues histidine 617 and aspartate 668 each act as charge relay system in the active site. 3 disulfides stabilise this stretch: cysteine 702/cysteine 768, cysteine 733/cysteine 747, and cysteine 758/cysteine 787. Serine 762 acts as the Charge relay system in catalysis.

It belongs to the peptidase S1 family. In terms of assembly, interacts with HJV. Post-translationally, the single-chain zymogen undergoes autoproteolytic processing. This results in TMPRSS6 shedding from the cell surface and conversion into an activated two-chains form which is released extracellularly. The process involves a trans-activation mechanism that requires TMPRSS6 oligomerization. Expressed at highest levels in adult mice liver, kidney and uterus. Also strongly expressed within the nasal cavity by olfactory epithelial cells. A weak, but detectable, signal in adult mice tissues analyzed including brain, lung, heart, kidney, spleen, muscle, intestine, thymus and pancreas. No signal in residual embryonic yolk sac, developing kidney tubules or in embryonic tissues analyzed including lung, heart, gastrointestinal tract and epithelium of the oral cavity.

The protein localises to the cell membrane. In terms of biological role, membrane-bound serine protease. Through the cleavage of cell surface HJV, a regulator of the expression of the iron absorption-regulating hormone hepicidin/HAMP, plays a role in iron homeostasis. This is Transmembrane protease serine 6 (Tmprss6) from Mus musculus (Mouse).